Here is a 396-residue protein sequence, read N- to C-terminus: MTGFFTILSFSLAALSVTNAAQILSVPKGAEVVPNGYIVVMKDDTSQQDFSSHRVWISSIHHNMTRRGLDGAGVKQTYDFDHLRGYSGIFDEDTIKDISNDPKVAFVEPDAIISQHVVVQQRKAPWGLSRLSNRRGGRNYVFDSSAGSGVWAYVVDSGVDVRHAEFQGRAVWGSNLVDNKNSDGTGHGTHVAGTIAGKTYGIAKKAKVVAVKVLNSEGKGPTSGIIAGINWSIRHARKHGMLQKSVLNMSLGGTYSAGLNHATAQAIKAGMFVSVSAGNDNINSNGNSPASERSVCTIAASTENDGKASFSNWGPAVDLYAPGHNILSARPGGGSQTMSGTSMAAPHAAGVAAYLIAKEGIPGNRACLRLKQLSQPTIRNPGPDTTTRLLYNGSGR.

The N-terminal stretch at 1–20 (MTGFFTILSFSLAALSVTNA) is a signal peptide. The propeptide occupies 21-116 (AQILSVPKGA…VEPDAIISQH (96 aa)). The region spanning 37-113 (YIVVMKDDTS…VAFVEPDAII (77 aa)) is the Inhibitor I9 domain. Asparagine 63 carries N-linked (GlcNAc...) asparagine glycosylation. The region spanning 125–396 (PWGLSRLSNR…TRLLYNGSGR (272 aa)) is the Peptidase S8 domain. Active-site charge relay system residues include aspartate 156 and histidine 187. 2 N-linked (GlcNAc...) asparagine glycosylation sites follow: asparagine 230 and asparagine 248. Catalysis depends on serine 342, which acts as the Charge relay system. Residues 377–389 (TIRNPGPDTTTRL) are compositionally biased toward polar residues. Residues 377–396 (TIRNPGPDTTTRLLYNGSGR) are disordered. Asparagine 392 carries N-linked (GlcNAc...) asparagine glycosylation.

Belongs to the peptidase S8 family.

It localises to the secreted. Its function is as follows. Secreted subtilisin-like serine protease with keratinolytic activity that contributes to pathogenicity. The protein is Subtilisin-like protease 5 (SUB5) of Arthroderma benhamiae (Trichophyton mentagrophytes).